The sequence spans 300 residues: Ribosomal RNA small subunit methyltransferase H (300 aa).

Residues 35-37 (GGH), Asp55, Phe82, Asp100, and Gln107 contribute to the S-adenosyl-L-methionine site.

The protein belongs to the methyltransferase superfamily. RsmH family.

Its subcellular location is the cytoplasm. It catalyses the reaction cytidine(1402) in 16S rRNA + S-adenosyl-L-methionine = N(4)-methylcytidine(1402) in 16S rRNA + S-adenosyl-L-homocysteine + H(+). Specifically methylates the N4 position of cytidine in position 1402 (C1402) of 16S rRNA. The protein is Ribosomal RNA small subunit methyltransferase H of Chlamydia trachomatis serovar A (strain ATCC VR-571B / DSM 19440 / HAR-13).